The chain runs to 339 residues: Annexin A2 (339 aa).

Residue serine 2 is modified to N-acetylserine. Residues 2–24 form an S100A10-binding site region; sequence STVHEILCKLSLEGDHSTPASAY. Position 24 is a phosphotyrosine; by SRC (tyrosine 24). Phosphoserine; by PKC is present on serine 26. 2 Annexin repeats span residues 33–104 and 105–176; these read FDAE…GLLK and TPAQ…ALAK. The residue at position 49 (lysine 49) is an N6-acetyllysine; alternate. Residue lysine 49 forms a Glycyl lysine isopeptide (Lys-Gly) (interchain with G-Cter in SUMO1); alternate linkage. A Glycyl lysine isopeptide (Lys-Gly) (interchain with G-Cter in SUMO2); alternate cross-link involves residue lysine 49. N6-acetyllysine is present on lysine 152. Position 184 is a phosphoserine (serine 184). 2 Annexin repeats span residues 189 to 261 and 265 to 336; these read ELID…NLVQ and NKPL…YLCG. Position 199 is a phosphotyrosine (tyrosine 199). N6-acetyllysine is present on lysine 227.

It belongs to the annexin family. As to quaternary structure, heterotetramer containing 2 light chains of S100A10/p11 and 2 heavy chains of ANXA2/p36. Interacts with ATP1B1. Interacts with DYSF. Interacts with COCH. Interacts (via repeat Annexin 1) with PCSK9 (via the C-terminal domain); the interaction inhibits the degradation of LDLR. Interacts with CEACAM1 (via the cytoplasmic domain); this interaction is regulated by phosphorylation of CEACAM1. Interacts with APPL2 and APPL1; targets APPL2 to endosomes and acting in parallel to RAB5A. Interacts with S100A4. May interact with UBAP2. Interacts with PLEKHG4B; this interaction is required for PLEKHG4B localization to cell-cell adhesions. (Microbial infection) Interacts with classical swine fever virus envelope glycoprotein E2. Post-translationally, ISGylated.

The protein resides in the secreted. It localises to the extracellular space. Its subcellular location is the extracellular matrix. It is found in the basement membrane. The protein localises to the melanosome. Its function is as follows. Calcium-regulated membrane-binding protein whose affinity for calcium is greatly enhanced by anionic phospholipids. It binds two calcium ions with high affinity. May be involved in heat-stress response. Inhibits PCSK9-enhanced LDLR degradation, probably reduces PCSK9 protein levels via a translational mechanism but also competes with LDLR for binding with PCSK9. Binds to endosomes damaged by phagocytosis of particulate wear debris and participates in endosomal membrane stabilization, thereby limiting NLRP3 inflammasome activation. Required for endothelial cell surface plasmin generation and may support fibrinolytic surveillance and neoangiogenesis. Functionally, (Microbial infection) May serve as a receptor for classical swine fever virus (CSFV). Promotes CSFV infection. The chain is Annexin A2 (ANXA2) from Sus scrofa (Pig).